The chain runs to 224 residues: Flagellar L-ring protein (224 aa).

Residues 1–15 (MARYLLLASTLLLAA) form the signal peptide. Cys-16 carries the N-palmitoyl cysteine lipid modification. Cys-16 carries S-diacylglycerol cysteine lipidation.

Belongs to the FlgH family. In terms of assembly, the basal body constitutes a major portion of the flagellar organelle and consists of four rings (L,P,S, and M) mounted on a central rod.

The protein resides in the cell outer membrane. It localises to the bacterial flagellum basal body. Its function is as follows. Assembles around the rod to form the L-ring and probably protects the motor/basal body from shearing forces during rotation. The protein is Flagellar L-ring protein of Shewanella sp. (strain ANA-3).